A 693-amino-acid polypeptide reads, in one-letter code: Adhesion G-protein coupled receptor G1 (693 aa).

Residues 1–25 (MTPQSLLQTTLFLLSLLFLVQGAHG) form the signal peptide. 26 to 33 (RGHREDFR) contributes to the heparin binding site. At 26-401 (RGHREDFRFC…SVEVDAVHKH (376 aa)) the chain is on the extracellular side. Intrachain disulfides connect Cys-35–Cys-91 and Cys-121–Cys-177. N-linked (GlcNAc...) asparagine glycosylation is found at Asn-39, Asn-148, and Asn-171. 190-200 (LKHPQKASRRP) is a heparin binding site. The 172-residue stretch at 224 to 395 (DMVSFEEDRI…AVLMVSSVEV (172 aa)) folds into the GAIN-B domain. Residues Asn-234, Asn-303, Asn-324, and Asn-341 are each glycosylated (N-linked (GlcNAc...) asparagine). Disulfide bonds link Cys-346-Cys-377 and Cys-366-Cys-379. The segment at 346–395 (CVFWVEDPTLSSPGHWSSAGCETVRRETQTSCFCNHLTYFAVLMVSSVEV) is GPS. The stachel stretch occupies residues 384–397 (YFAVLMVSSVEVDA). Residues 402 to 424 (YLSLLSYVGCVVSALACLVTIAA) traverse the membrane as a helical segment. Over 425–437 (YLCSRVPLPCRRK) the chain is Cytoplasmic. The chain crosses the membrane as a helical span at residues 438-460 (PRDYTIKVHMNLLLAVFLLDTSF). The Extracellular segment spans residues 461–465 (LLSEP). A helical membrane pass occupies residues 466-495 (VALTGSEAGCRASAIFLHFSLLTCLSWMGL). A disulfide bond links Cys-475 and Cys-562. Over 496–510 (EGYNLYRLVVEVFGT) the chain is Cytoplasmic. A helical membrane pass occupies residues 511–533 (YVPGYLLKLSAMGWGFPIFLVTL). The Extracellular portion of the chain corresponds to 534 to 562 (VALVDVDNYGPIILAVHRTPEGVIYPSMC). Residues 563-588 (WIRDSLVSYITNLGLFSLVFLFNMAM) traverse the membrane as a helical segment. Topologically, residues 589–602 (LATMVVQILRLRPH) are cytoplasmic. Residues 603 to 624 (TQKWSHVLTLLGLSLVLGLPWA) form a helical membrane-spanning segment. Residues 625 to 628 (LIFF) are Extracellular-facing. Residues 629–654 (SFASGTFQLVVLYLFSIITSFQGFLI) traverse the membrane as a helical segment. At 655-693 (FIWYWSMRLQARGGPSPLKSNSDSARLPISSGSTSSSRI) the chain is on the cytoplasmic side. A disordered region spans residues 670–693 (SPLKSNSDSARLPISSGSTSSSRI). The segment covering 684 to 693 (SSGSTSSSRI) has biased composition (low complexity).

It belongs to the G-protein coupled receptor 2 family. LN-TM7 subfamily. Heterodimer of 2 chains generated by proteolytic processing; the large extracellular N-terminal fragment (ADGRG1 NT) and the membrane-bound C-terminal fragment (ADGRG1-CT) predominantly remain associated and non-covalently linked. ADGRG1 NT self-associates in a trans-trans manner; the homophilic interaction enhances receptor signaling. Interacts with TGM2. Interacts with heparin; leading to the reduction of ADGRG1 shedding. Interacts with COL3A1. Part of a GPCR-tetraspanin complex at least consisting of ADGRG1, CD81, eventually CD9, and GNA11 in which CD81 is enhancing the association of ADGRG1 with GNA11. In terms of processing, autoproteolytically cleaved into 2 fragments; the large extracellular N-terminal fragment (ADGRG1 NT) and the membrane-bound C-terminal fragment (ADGRG1 CT) predominantly remain associated and non-covalently linked. Shedding to yield the secreted ADGRG1 N-terminal fragment seems to involve metalloprotease(s). Post-translationally, N-glycosylated. Contains sialic acid residues. Ubiquitinated. Undergoes polyubiquitination upon activation. Widely distributed with highest levels found in thyroid gland, brain and heart. Expressed in a great number of tumor cells. Expression is down-regulated in different tumors from highly metastatic cells.

The protein localises to the cell membrane. The protein resides in the secreted. Its subcellular location is the membrane raft. With respect to regulation, forms a heterodimer of 2 chains generated by proteolytic processing that remain associated through non-covalent interactions mediated by the GAIN-B domain. In the inactivated receptor, the Stachel sequence (also named stalk) is embedded in the GAIN-B domain, where it adopts a beta-strand conformation. On activation, the Stachel moves into the 7 transmembrane region and adopts a twisted hook-shaped configuration that forms contacts within the receptor, leading to coupling of a G-alpha protein, which activates signaling. The cleaved GAIN-B and N-terminal domains can then dissociate from the rest of the receptor. In terms of biological role, adhesion G-protein coupled receptor (aGPCR) for steroid hormone 17alpha-hydroxypregnenolone (17-OH), which is involved in cell adhesion and cell-cell interactions. Ligand binding causes a conformation change that triggers signaling via guanine nucleotide-binding proteins (G proteins) and modulates the activity of downstream effectors, such as RhoA pathway. ADGRG1 is coupled to G(12) and/or G(13) G proteins (GNA12 and GNA13, respectively) and mediates the activation Rho small GTPases. Acts as a potent suppressor of ferroptosis: binding to 17-OH-binding initiates signaling that down-regulates CD36 and alleviates ferroptosis-induced liver injury. Ligand-binding also induces cell adhesion activity via association with proteins such as collagen III/COL3A1 and TGM2. Mediates cell matrix adhesion in developing neurons and hematopoietic stem cells. Involved in cortical development, specifically in maintenance of the pial basement membrane integrity and in cortical lamination: association with COL3A1 in the developing brain inhibits neuronal migration via activation of the RhoA pathway. Together with TGM2, acts as a regulator of myelination and myelin repair in oligodendrocyte precursor cells. Acts as a hemostatic sensor of shear force: G protein-coupled receptor signaling is activated in response to shear force in platelets, promoting G(13) G protein signaling, and platelet shape change and aggregation in a COL3A1-dependent manner. Acts as an inhibitor of VEGFA production thereby inhibiting angiogenesis through a signaling pathway mediated by PRKCA. Plays a role in the maintenance of hematopoietic stem cells in bone marrow niche. Plays an essential role in testis development. In Homo sapiens (Human), this protein is Adhesion G-protein coupled receptor G1.